The chain runs to 679 residues: Methionine--tRNA ligase (679 aa).

Positions P14 to H24 match the 'HIGH' region motif. Residues C145, C148, C158, and C161 each coordinate Zn(2+). The short motif at K331–S335 is the 'KMSKS' region element. K334 contacts ATP. A tRNA-binding domain is found at T577–K679.

Belongs to the class-I aminoacyl-tRNA synthetase family. MetG type 1 subfamily. In terms of assembly, homodimer. It depends on Zn(2+) as a cofactor.

It localises to the cytoplasm. The catalysed reaction is tRNA(Met) + L-methionine + ATP = L-methionyl-tRNA(Met) + AMP + diphosphate. Its function is as follows. Is required not only for elongation of protein synthesis but also for the initiation of all mRNA translation through initiator tRNA(fMet) aminoacylation. The polypeptide is Methionine--tRNA ligase (Pseudomonas putida (strain ATCC 700007 / DSM 6899 / JCM 31910 / BCRC 17059 / LMG 24140 / F1)).